Consider the following 203-residue polypeptide: Large ribosomal subunit protein bL25 (203 aa).

It belongs to the bacterial ribosomal protein bL25 family. CTC subfamily. Part of the 50S ribosomal subunit; part of the 5S rRNA/L5/L18/L25 subcomplex. Contacts the 5S rRNA. Binds to the 5S rRNA independently of L5 and L18.

This is one of the proteins that binds to the 5S RNA in the ribosome where it forms part of the central protuberance. This is Large ribosomal subunit protein bL25 from Rickettsia africae (strain ESF-5).